A 1583-amino-acid polypeptide reads, in one-letter code: Dynamin-binding protein (1583 aa).

An N-acetylmethionine modification is found at M1. SH3 domains lie at E2–I61, E66–L126, Y145–P204, and Q243–K302. Disordered regions lie at residues H217–P244, E306–E329, and E366–Y464. Acidic residues predominate over residues G224–Q243. Residues E366 to T379 are compositionally biased toward basic and acidic residues. The span at E406–Y442 shows a compositional bias: polar residues. S495 carries the post-translational modification Phosphoserine. Disordered regions lie at residues R594 to Q656 and L671 to D693. Residues P637–P653 show a composition bias toward pro residues. Residues E675 to P685 show a composition bias toward basic and acidic residues. The stretch at L742–M762 forms a coiled coil. Residues K791–Y974 enclose the DH domain. In terms of domain architecture, BAR spans L1015–L1224. The region spanning P1292–T1355 is the SH3 5 domain. The interval R1357 to T1496 is disordered. The span at D1361–S1387 shows a compositional bias: low complexity. Residues G1388–T1414 are compositionally biased toward polar residues. Residues S1433–P1456 show a composition bias toward low complexity. An SH3 6 domain is found at E1519–Y1582.

In terms of assembly, binds DNM1 via its N-terminal SH3 domains. The C-terminal SH3 domain binds a complex containing actin, tubulin, Hsp70 and actin-regulatory proteins, such as ENAH, EVL, WIRE, CR16, WAVE1 and NAP1L1. Interacts with FASLG. Interacts (via SH3 domain 6) with WASL. Interacts (via SH3 domain 6) interacts with ENAH. Interacts (via C-terminal domain) with TJP1; required for the apical cell-cell junction localization of DNMBP.

The protein localises to the cytoplasm. It localises to the golgi apparatus. The protein resides in the golgi stack. Its subcellular location is the cytoskeleton. It is found in the synapse. The protein localises to the cell junction. Functionally, plays a critical role as a guanine nucleotide exchange factor (GEF) for CDC42 in several intracellular processes associated with the actin and microtubule cytoskeleton. Regulates the structure of apical junctions in epithelial cells. Participates in the normal lumenogenesis of epithelial cell cysts by regulating spindle orientation. Plays a key role in ciliogenesis and cyst formation. May play a role in membrane trafficking between the cell surface and the Golgi. This Canis lupus familiaris (Dog) protein is Dynamin-binding protein.